A 52-amino-acid chain; its full sequence is Disintegrin multisquamatin (52 aa).

Positions E1 to P50 constitute a Disintegrin domain. Disulfide bonds link C5/C14, C10/C35, C11/C40, and C23/C42. Positions R27–D29 match the Cell attachment site motif.

It belongs to the venom metalloproteinase (M12B) family. P-II subfamily. P-IIa sub-subfamily. Monomer. As to expression, expressed by the venom gland.

The protein localises to the secreted. Inhibits ADP-induced human, canine and rabbit platelet aggregation by binding with high affinity to alpha-IIb/beta-3 (ITGA2B/ITGB3). This Echis multisquamatus (Central Asian sand viper) protein is Disintegrin multisquamatin.